The sequence spans 109 residues: Small ribosomal subunit protein uS17 (109 aa).

This sequence belongs to the universal ribosomal protein uS17 family. In terms of assembly, part of the 30S ribosomal subunit.

Its function is as follows. One of the primary rRNA binding proteins, it binds specifically to the 5'-end of 16S ribosomal RNA. The polypeptide is Small ribosomal subunit protein uS17 (Methanococcus vannielii).